A 511-amino-acid chain; its full sequence is Vesicular acetylcholine transporter (511 aa).

The Cytoplasmic segment spans residues 1–36 (MAVGQAKAAMGKISSAIGERSKRISGAMNEPRRKRK). A helical membrane pass occupies residues 37–57 (ILLVIVCIAMLLDNMLYMVIV). The Lumenal, vesicle portion of the chain corresponds to 58–108 (PIIPNYLETIRTYKLVYITTPSNGTNGSLLNSTQRAVLERNPNANEDIQIG). Asparagine 80, asparagine 83, and asparagine 88 each carry an N-linked (GlcNAc...) asparagine glycan. A helical transmembrane segment spans residues 109-129 (VLFASKAILQLLSNPFTGTFI). Topologically, residues 130-135 (DRVGYD) are cytoplasmic. Residues 136-156 (IPLLIGLTIMFFSTITFAFGE) form a helical membrane-spanning segment. Over 157-165 (SYAILFAAR) the chain is Lumenal, vesicle. Residues 166–186 (SLQGLGSAFADTSGIAMIADK) traverse the membrane as a helical segment. Residues 187–197 (YTEESERTQAL) are Cytoplasmic-facing. A helical membrane pass occupies residues 198 to 218 (GIALAFISFGSLVAPPFGGVL). At 219-225 (YQFAGKW) the chain is on the lumenal, vesicle side. Residues 226-246 (VPFLVLSFVCLLDGILLLMVV) form a helical membrane-spanning segment. Residues 247–267 (TPFASRTRVNTLQGTPIYKLM) lie on the Cytoplasmic side of the membrane. A helical transmembrane segment spans residues 268–288 (IDPYIAVVAGALTTCNIPLAF). Residues 289-306 (LEPTISNWMKKTMNASEW) lie on the Lumenal, vesicle side of the membrane. N-linked (GlcNAc...) asparagine glycosylation is present at asparagine 302. Residues 307–327 (QMGITWLPAFFPHILGVYITV) form a helical membrane-spanning segment. Residues 328–337 (KLAAKYPNYQ) are Cytoplasmic-facing. The chain crosses the membrane as a helical span at residues 338–358 (WLYGAVGLVIIGASSCTIPAC). The Lumenal, vesicle portion of the chain corresponds to 359 to 363 (RNFEE). The chain crosses the membrane as a helical span at residues 364 to 384 (LIIPLCALCFGIALVDTALLP). Residues 385–400 (TLAFLVDIRYVSVYGS) are Cytoplasmic-facing. The helical transmembrane segment at 401–421 (VYAIADISYSVAYALGPIMAG) threads the bilayer. Over 422-428 (QIVHDLG) the chain is Lumenal, vesicle. A helical transmembrane segment spans residues 429 to 449 (FVQLNLGMGLVNILYAPGLLF). Residues 450–511 (LRNVCQMKPS…VLSDQEGYSE (62 aa)) are Cytoplasmic-facing. A disordered region spans residues 485–511 (EAKEPHGTSSGNHSVHAVLSDQEGYSE).

This sequence belongs to the major facilitator superfamily. Vesicular transporter family. In terms of tissue distribution, high expression in the electric lobe of the brain.

It is found in the membrane. Functionally, involved in acetylcholine transport into synaptic vesicles. This Torpedo marmorata (Marbled electric ray) protein is Vesicular acetylcholine transporter.